Here is a 258-residue protein sequence, read N- to C-terminus: Hydroxyacylglutathione hydrolase (258 aa).

His55, His57, Asp59, His60, His115, Asp132, and His170 together coordinate Zn(2+).

This sequence belongs to the metallo-beta-lactamase superfamily. Glyoxalase II family. As to quaternary structure, monomer. The cofactor is Zn(2+).

The catalysed reaction is an S-(2-hydroxyacyl)glutathione + H2O = a 2-hydroxy carboxylate + glutathione + H(+). The protein operates within secondary metabolite metabolism; methylglyoxal degradation; (R)-lactate from methylglyoxal: step 2/2. Functionally, thiolesterase that catalyzes the hydrolysis of S-D-lactoyl-glutathione to form glutathione and D-lactic acid. This Shewanella denitrificans (strain OS217 / ATCC BAA-1090 / DSM 15013) protein is Hydroxyacylglutathione hydrolase.